Reading from the N-terminus, the 493-residue chain is MPMTGLLQTTLSTADQDRSGPAATTGDTPARANTKRLHVITWGCQMNVYDSARMTDVLSPLGYTAHAEPEGADMIVLNTCHIRDKATEKVFSELGRLRLLKEARAREGQPMLLAVAGCVAQAEGEQILARAPYVDIVLGPQTYHRLGGMVRRAMNGERVIETDFPPEDKFDYLPEAAAPQHGPGLAGGRTAFLTIQEGCDKFCSFCVVPYTRGAEVSRPASSVLAEARRMVRGGAREITLLGQNVNAYHGLGEDGEVWTLARLIRALADIPDLLRIRYTTSHPRDVSDDLIAAHRDIPQLMPFLHLPVQSGSDRILAAMNRRHTAEDYFRVVDRLREARPDLALSSDFIVGHPGETDEDFEDTMRLIERVGFAQAYSFKYSPRPGTPAAERDNHVPEPVMDERLQRLQALLRTQQEAFNTACIGKTVNVLLVTPGRHPGQIGGRSPWLQAVHLDAPATLIGQEVPVTITAAHTNSLSATLPDCAPHPKELTCA.

Polar residues predominate over residues 1–14 (MPMTGLLQTTLSTA). Residues 1–31 (MPMTGLLQTTLSTADQDRSGPAATTGDTPAR) form a disordered region. Residues 35 to 155 (KRLHVITWGC…LGGMVRRAMN (121 aa)) form the MTTase N-terminal domain. [4Fe-4S] cluster-binding residues include C44, C80, C118, C199, C203, and C206. The Radical SAM core domain occupies 185 to 417 (LAGGRTAFLT…QALLRTQQEA (233 aa)). One can recognise a TRAM domain in the interval 420 to 482 (TACIGKTVNV…TNSLSATLPD (63 aa)).

The protein belongs to the methylthiotransferase family. MiaB subfamily. In terms of assembly, monomer. It depends on [4Fe-4S] cluster as a cofactor.

The protein localises to the cytoplasm. It carries out the reaction N(6)-dimethylallyladenosine(37) in tRNA + (sulfur carrier)-SH + AH2 + 2 S-adenosyl-L-methionine = 2-methylsulfanyl-N(6)-dimethylallyladenosine(37) in tRNA + (sulfur carrier)-H + 5'-deoxyadenosine + L-methionine + A + S-adenosyl-L-homocysteine + 2 H(+). Functionally, catalyzes the methylthiolation of N6-(dimethylallyl)adenosine (i(6)A), leading to the formation of 2-methylthio-N6-(dimethylallyl)adenosine (ms(2)i(6)A) at position 37 in tRNAs that read codons beginning with uridine. The polypeptide is tRNA-2-methylthio-N(6)-dimethylallyladenosine synthase (Granulibacter bethesdensis (strain ATCC BAA-1260 / CGDNIH1)).